The following is an 821-amino-acid chain: Zinc finger protein 41 (821 aa).

The interval 1–55 (MAANGDSPPWSPALAAEGRGSSCEVRRERTPEARIHSVKRYPDLSPGPKGRSSAD) is disordered. The span at 24–35 (EVRRERTPEARI) shows a compositional bias: basic and acidic residues. One can recognise a KRAB domain in the interval 69 to 140 (VSFEDVTVDF…EGEAPHQSCS (72 aa)). Lysine 120 participates in a covalent cross-link: Glycyl lysine isopeptide (Lys-Gly) (interchain with G-Cter in SUMO2). The C2H2-type 1 zinc finger occupies 313 to 335 (YVCTECVMGFTQKSHLFEHQRIH). A C2H2-type 2; degenerate zinc finger spans residues 341 to 364 (RECDKSNKVFPQKPQVDVHPSVYT). 10 C2H2-type zinc fingers span residues 369 to 391 (YLCT…QKIH), 397 to 419 (YKCS…LRIH), 425 to 447 (YECS…QKTH), 453 to 475 (YECN…QRIH), 481 to 503 (YVCA…QRIH), 509 to 531 (YECS…QRIH), 537 to 559 (YICT…QKTH), 565 to 587 (YMCA…QKTH), 593 to 615 (YKCN…QKSH), and 621 to 643 (YECK…QRIH). Residue lysine 647 forms a Glycyl lysine isopeptide (Lys-Gly) (interchain with G-Cter in SUMO2) linkage. 6 consecutive C2H2-type zinc fingers follow at residues 649 to 671 (YVCP…HRIH), 677 to 699 (YECS…QKIH), 705 to 727 (NICA…QKIH), 733 to 755 (YECG…QKSH), 761 to 783 (YECS…QIIH), and 789 to 811 (YACT…QKMH).

The protein belongs to the krueppel C2H2-type zinc-finger protein family. In terms of tissue distribution, expressed in the heart, brain, placenta, lung, liver, skeletal muscle, kidney and pancreas.

The protein localises to the nucleus. May be involved in transcriptional regulation. This chain is Zinc finger protein 41 (ZNF41), found in Homo sapiens (Human).